The chain runs to 159 residues: Peptide methionine sulfoxide reductase MsrB (159 aa).

A MsrB domain is found at 22–144 (RERLEANLTA…NSVSLQFVKA (123 aa)). Positions 61, 64, 110, and 113 each coordinate Zn(2+). The Nucleophile role is filled by Cys133.

It belongs to the MsrB Met sulfoxide reductase family. Zn(2+) is required as a cofactor.

It carries out the reaction L-methionyl-[protein] + [thioredoxin]-disulfide + H2O = L-methionyl-(R)-S-oxide-[protein] + [thioredoxin]-dithiol. This is Peptide methionine sulfoxide reductase MsrB from Caulobacter vibrioides (strain ATCC 19089 / CIP 103742 / CB 15) (Caulobacter crescentus).